Here is a 461-residue protein sequence, read N- to C-terminus: 3-deoxy-D-manno-octulosonic acid transferase (461 aa).

The chain crosses the membrane as a helical; Signal-anchor span at residues 2-22 (MLLYYTLSFILLPVYFIIIFI). The 42-residue stretch at 47–88 (SALDFIQMSVNKEGFTDHKTTSYVDMHRNASLMYKLSLERSY) folds into the RPE1 insert domain. Residue E102 is the Proton acceptor of the active site. Residues 306-307 (PR), 347-349 (FGE), and 372-375 (NILE) contribute to the CMP site.

This sequence belongs to the glycosyltransferase group 1 family. Glycosyltransferase 30 subfamily.

Its subcellular location is the cell inner membrane. The catalysed reaction is lipid IVA (E. coli) + CMP-3-deoxy-beta-D-manno-octulosonate = alpha-Kdo-(2-&gt;6)-lipid IVA (E. coli) + CMP + H(+). The protein operates within bacterial outer membrane biogenesis; LPS core biosynthesis. Functionally, involved in lipopolysaccharide (LPS) biosynthesis. Catalyzes the transfer of 3-deoxy-D-manno-octulosonate (Kdo) residue(s) from CMP-Kdo to lipid IV(A), the tetraacyldisaccharide-1,4'-bisphosphate precursor of lipid A. In Rickettsia prowazekii (strain Madrid E), this protein is 3-deoxy-D-manno-octulosonic acid transferase (waaA).